A 161-amino-acid polypeptide reads, in one-letter code: ATP synthase subunit b (161 aa).

Residues 12-32 traverse the membrane as a helical segment; sequence IAFFLFVFFCMKYIWPNLISL.

Belongs to the ATPase B chain family. As to quaternary structure, F-type ATPases have 2 components, F(1) - the catalytic core - and F(0) - the membrane proton channel. F(1) has five subunits: alpha(3), beta(3), gamma(1), delta(1), epsilon(1). F(0) has three main subunits: a(1), b(2) and c(10-14). The alpha and beta chains form an alternating ring which encloses part of the gamma chain. F(1) is attached to F(0) by a central stalk formed by the gamma and epsilon chains, while a peripheral stalk is formed by the delta and b chains.

The protein localises to the cell membrane. Its function is as follows. F(1)F(0) ATP synthase produces ATP from ADP in the presence of a proton or sodium gradient. F-type ATPases consist of two structural domains, F(1) containing the extramembraneous catalytic core and F(0) containing the membrane proton channel, linked together by a central stalk and a peripheral stalk. During catalysis, ATP synthesis in the catalytic domain of F(1) is coupled via a rotary mechanism of the central stalk subunits to proton translocation. Functionally, component of the F(0) channel, it forms part of the peripheral stalk, linking F(1) to F(0). The protein is ATP synthase subunit b of Wigglesworthia glossinidia brevipalpis.